The sequence spans 191 residues: Protein GrpE (191 aa).

The protein belongs to the GrpE family. As to quaternary structure, homodimer.

The protein localises to the cytoplasm. Participates actively in the response to hyperosmotic and heat shock by preventing the aggregation of stress-denatured proteins, in association with DnaK and GrpE. It is the nucleotide exchange factor for DnaK and may function as a thermosensor. Unfolded proteins bind initially to DnaJ; upon interaction with the DnaJ-bound protein, DnaK hydrolyzes its bound ATP, resulting in the formation of a stable complex. GrpE releases ADP from DnaK; ATP binding to DnaK triggers the release of the substrate protein, thus completing the reaction cycle. Several rounds of ATP-dependent interactions between DnaJ, DnaK and GrpE are required for fully efficient folding. The protein is Protein GrpE of Nitratidesulfovibrio vulgaris (strain ATCC 29579 / DSM 644 / CCUG 34227 / NCIMB 8303 / VKM B-1760 / Hildenborough) (Desulfovibrio vulgaris).